Consider the following 478-residue polypeptide: Poly(A) RNA polymerase cid11 (478 aa).

The Mg(2+) site is built by Asp106 and Asp108. The PAP-associated domain maps to 263–317 (SLGRLLIDFFYYYGFSFNYLDSVVSVRSGTVLNKQEKGWAMEVNNSLCVEEPFNT). Residues 428–447 (QSYENKANRDSDFQGQTSLT) form a disordered region.

Belongs to the DNA polymerase type-B-like family. The cofactor is Mg(2+). Requires Mn(2+) as cofactor.

The protein localises to the cytoplasm. The protein resides in the nucleus. The enzyme catalyses RNA(n) + ATP = RNA(n)-3'-adenine ribonucleotide + diphosphate. This is Poly(A) RNA polymerase cid11 (cid11) from Schizosaccharomyces pombe (strain 972 / ATCC 24843) (Fission yeast).